Reading from the N-terminus, the 154-residue chain is Large ribosomal subunit protein uL15 (154 aa).

Positions 1–61 are disordered; it reads MDLSTLKPVA…GGQMPLMRRM (61 aa).

The protein belongs to the universal ribosomal protein uL15 family. As to quaternary structure, part of the 50S ribosomal subunit.

Functionally, binds to the 23S rRNA. This chain is Large ribosomal subunit protein uL15, found in Oenococcus oeni (strain ATCC BAA-331 / PSU-1).